The primary structure comprises 105 residues: uncharacterized protein (105 aa).

This is an uncharacterized protein from Rickettsia conorii (strain ATCC VR-613 / Malish 7).